The primary structure comprises 199 residues: Pyridoxine/pyridoxamine 5'-phosphate oxidase (199 aa).

FMN-binding positions include 44–49 (RTVLLK), 59–60 (YT), lysine 66, and glutamine 91. Lysine 49 is a substrate binding site. The substrate site is built by tyrosine 109, arginine 113, and serine 117. Residues 126-127 (QS) and tryptophan 171 contribute to the FMN site. A substrate-binding site is contributed by 177-179 (RLH). Arginine 181 serves as a coordination point for FMN.

Belongs to the pyridoxamine 5'-phosphate oxidase family. Homodimer. The cofactor is FMN.

It catalyses the reaction pyridoxamine 5'-phosphate + O2 + H2O = pyridoxal 5'-phosphate + H2O2 + NH4(+). The enzyme catalyses pyridoxine 5'-phosphate + O2 = pyridoxal 5'-phosphate + H2O2. It functions in the pathway cofactor metabolism; pyridoxal 5'-phosphate salvage; pyridoxal 5'-phosphate from pyridoxamine 5'-phosphate: step 1/1. It participates in cofactor metabolism; pyridoxal 5'-phosphate salvage; pyridoxal 5'-phosphate from pyridoxine 5'-phosphate: step 1/1. Functionally, catalyzes the oxidation of either pyridoxine 5'-phosphate (PNP) or pyridoxamine 5'-phosphate (PMP) into pyridoxal 5'-phosphate (PLP). This is Pyridoxine/pyridoxamine 5'-phosphate oxidase from Xanthomonas campestris pv. campestris (strain 8004).